A 77-amino-acid polypeptide reads, in one-letter code: MMFTPLIVLTLLVLATAEHQCGPNEQWSDCPGCELQCGESDKPCPAMCGDPKCYCSPDQYRRIPDGRCIRKIQCPQH.

Positions 1–17 (MMFTPLIVLTLLVLATA) are cleaved as a signal peptide. 5 cysteine pairs are disulfide-bonded: Cys-21–Cys-53, Cys-30–Cys-48, Cys-33–Cys-44, Cys-37–Cys-74, and Cys-55–Cys-68. Residues 21 to 74 (CGPNEQWSDCPGCELQCGESDKPCPAMCGDPKCYCSPDQYRRIPDGRCIRKIQC) enclose the TIL domain.

Its subcellular location is the secreted. Defends the organism against the host's proteinases. The sequence is that of Serine protease inhibitor 1 from Anisakis simplex (Herring worm).